The primary structure comprises 341 residues: L-threonine 3-dehydrogenase (341 aa).

Cys38 is a binding site for Zn(2+). Residues Thr40 and His43 each act as charge relay system in the active site. Zn(2+) contacts are provided by His63, Glu64, Cys93, Cys96, Cys99, and Cys107. Residues Ile175, Asp195, Arg200, 262-264, and 286-287 contribute to the NAD(+) site; these read LGI and IY.

It belongs to the zinc-containing alcohol dehydrogenase family. Homotetramer. It depends on Zn(2+) as a cofactor.

The protein localises to the cytoplasm. The catalysed reaction is L-threonine + NAD(+) = (2S)-2-amino-3-oxobutanoate + NADH + H(+). It functions in the pathway amino-acid degradation; L-threonine degradation via oxydo-reductase pathway; glycine from L-threonine: step 1/2. Its function is as follows. Catalyzes the NAD(+)-dependent oxidation of L-threonine to 2-amino-3-ketobutyrate. This Yersinia enterocolitica serotype O:8 / biotype 1B (strain NCTC 13174 / 8081) protein is L-threonine 3-dehydrogenase.